The chain runs to 84 residues: Small ribosomal subunit protein bS16 (84 aa).

This sequence belongs to the bacterial ribosomal protein bS16 family.

This is Small ribosomal subunit protein bS16 from Ralstonia pickettii (strain 12J).